We begin with the raw amino-acid sequence, 424 residues long: Histidine--tRNA ligase (424 aa).

This sequence belongs to the class-II aminoacyl-tRNA synthetase family. Homodimer.

It localises to the cytoplasm. It catalyses the reaction tRNA(His) + L-histidine + ATP = L-histidyl-tRNA(His) + AMP + diphosphate + H(+). The chain is Histidine--tRNA ligase from Francisella philomiragia subsp. philomiragia (strain ATCC 25017 / CCUG 19701 / FSC 153 / O#319-036).